Consider the following 359-residue polypeptide: Holliday junction branch migration complex subunit RuvB (359 aa).

Residues 1–10 show a composition bias toward basic and acidic residues; that stretch reads MPEHDPHQEN. Positions 1–20 are disordered; that stretch reads MPEHDPHQENRTVSSVRLED. The segment at 4 to 188 is large ATPase domain (RuvB-L); the sequence is HDPHQENRTV…FGIPLRLIFY (185 aa). ATP-binding positions include L27, R28, G69, K72, T73, T74, 135–137, R178, Y188, and R225; that span reads EDF. Position 73 (T73) interacts with Mg(2+). Positions 189-259 are small ATPAse domain (RuvB-S); sequence TASELELIVS…TADAALQRLE (71 aa). The interval 262 to 359 is head domain (RuvB-H); that stretch reads SLGLDAMDRR…LLHRDGSADE (98 aa). Residues R298, R317, and R322 each contribute to the DNA site.

The protein belongs to the RuvB family. In terms of assembly, homohexamer. Forms an RuvA(8)-RuvB(12)-Holliday junction (HJ) complex. HJ DNA is sandwiched between 2 RuvA tetramers; dsDNA enters through RuvA and exits via RuvB. An RuvB hexamer assembles on each DNA strand where it exits the tetramer. Each RuvB hexamer is contacted by two RuvA subunits (via domain III) on 2 adjacent RuvB subunits; this complex drives branch migration. In the full resolvosome a probable DNA-RuvA(4)-RuvB(12)-RuvC(2) complex forms which resolves the HJ.

Its subcellular location is the cytoplasm. It carries out the reaction ATP + H2O = ADP + phosphate + H(+). Functionally, the RuvA-RuvB-RuvC complex processes Holliday junction (HJ) DNA during genetic recombination and DNA repair, while the RuvA-RuvB complex plays an important role in the rescue of blocked DNA replication forks via replication fork reversal (RFR). RuvA specifically binds to HJ cruciform DNA, conferring on it an open structure. The RuvB hexamer acts as an ATP-dependent pump, pulling dsDNA into and through the RuvAB complex. RuvB forms 2 homohexamers on either side of HJ DNA bound by 1 or 2 RuvA tetramers; 4 subunits per hexamer contact DNA at a time. Coordinated motions by a converter formed by DNA-disengaged RuvB subunits stimulates ATP hydrolysis and nucleotide exchange. Immobilization of the converter enables RuvB to convert the ATP-contained energy into a lever motion, pulling 2 nucleotides of DNA out of the RuvA tetramer per ATP hydrolyzed, thus driving DNA branch migration. The RuvB motors rotate together with the DNA substrate, which together with the progressing nucleotide cycle form the mechanistic basis for DNA recombination by continuous HJ branch migration. Branch migration allows RuvC to scan DNA until it finds its consensus sequence, where it cleaves and resolves cruciform DNA. The protein is Holliday junction branch migration complex subunit RuvB of Granulibacter bethesdensis (strain ATCC BAA-1260 / CGDNIH1).